A 790-amino-acid polypeptide reads, in one-letter code: E3 ubiquitin-protein ligase Jade-2 (790 aa).

2 disordered regions span residues 1-52 (MEEK…PSEV) and 111-130 (GPPA…SQPD). 2 positions are modified to phosphoserine: serine 9 and serine 15. The span at 9–28 (SISSDNSDTTDSHATSTSAS) shows a compositional bias: low complexity. Lysine 32 and lysine 38 each carry N6-acetyllysine. A Phosphoserine modification is found at serine 117. A PHD-type 1 zinc finger spans residues 199–249 (DVVCDVCRSPEGEDGNEMVFCDKCNVCVHQACYGILKVPTGSWLCRTCALG). The C2HC pre-PHD-type zinc finger occupies 251 to 285 (QPKCLLCPKRGGALKPTRSGTKWVHVSCALWIPEV). Residue lysine 298 is modified to N6-acetyllysine. Residues 309 to 365 (LSCSLCKECTGTCIQCSMPSCVTAFHVTCAFDHGLEMRTILADNDEVKFKSFCQEHS) form a PHD-type 2 zinc finger. Disordered regions lie at residues 361 to 386 (CQEH…AGED) and 578 to 777 (SFMR…PREA). Residues 372–381 (EPTSEPTEPS) show a composition bias toward polar residues. The segment covering 593 to 606 (KARGRTRLPAKKKP) has biased composition (basic residues). Residues 684–693 (AASVAADSDV) show a composition bias toward low complexity. The span at 737 to 747 (ERPKVSLHFDT) shows a compositional bias: basic and acidic residues. Positions 757-767 (EMSDSDVEAED) are enriched in acidic residues.

This sequence belongs to the JADE family. Component of the HBO1 complex composed at least of ING4 or ING5, MYST2/HBO1, MEAF6, and one of JADE1, JADE2 and JADE3. Interacts (via C-terminus) with KDM1A (via AOD/Tower domain).

The enzyme catalyses S-ubiquitinyl-[E2 ubiquitin-conjugating enzyme]-L-cysteine + [acceptor protein]-L-lysine = [E2 ubiquitin-conjugating enzyme]-L-cysteine + N(6)-ubiquitinyl-[acceptor protein]-L-lysine.. It participates in protein modification; protein ubiquitination. Functionally, scaffold subunit of some HBO1 complexes, which have a histone H4 acetyltransferase activity. Acts as an E3 ubiquitin-protein ligase mediating the ubiquitination and subsequent proteasomal degradation of target protein histone demethylase KDM1A. Also acts as a ubiquitin ligase E3 toward itself. Positive regulator of neurogenesis. In Homo sapiens (Human), this protein is E3 ubiquitin-protein ligase Jade-2 (JADE2).